A 125-amino-acid polypeptide reads, in one-letter code: MVMLKISSFLAVYALVVCQMDSFQAAPVRPGLESITDRVTLSDYEARRLLNALVKDFIQMTAEELEQASEGNSVTAQKRACNTATCVTHRLADFLSRSGGVGKNNFVPTNVGSKAFGRRRRSVQI.

A signal peptide spans 1–25 (MVMLKISSFLAVYALVVCQMDSFQA). The propeptide occupies 26–77 (APVRPGLESITDRVTLSDYEARRLLNALVKDFIQMTAEELEQASEGNSVTAQ). Cysteine 81 and cysteine 86 are joined by a disulfide. Phenylalanine 116 is modified (phenylalanine amide). Positions 122 to 125 (SVQI) are excised as a propeptide.

This sequence belongs to the calcitonin family.

The protein resides in the secreted. In terms of biological role, CGRP1/CALCA is a peptide hormone that induces vasodilation mediated by the CALCRL-RAMP1 receptor complex. Dilates a variety of vessels including the coronary, cerebral and systemic vasculature. Its abundance in the CNS also points toward a neurotransmitter or neuromodulator role. It also elevates platelet cAMP. CGRP1 can also bind and activate CALCR-RAMP1 (AMYR1) receptor complex. This chain is Calcitonin gene-related peptide 1 (CALCA), found in Gallus gallus (Chicken).